We begin with the raw amino-acid sequence, 445 residues long: Coronin-A (445 aa).

WD repeat units lie at residues 77-117 (GHKS…LTDS), 127-167 (GHKR…NLTT), 170-209 (GHSD…IVNE), and 259-299 (DSAS…PYIH). Positions 410–444 (KNEKELREEYEKLKIRVAYLESEIVKKDAKIKELT) form a coiled coil.

It belongs to the WD repeat coronin family. In terms of assembly, binds to F-actin.

It localises to the cell surface. Functionally, required for normal motility. Participates in cytokinesis. In Dictyostelium discoideum (Social amoeba), this protein is Coronin-A (corA).